Consider the following 276-residue polypeptide: D-apionate oxidoisomerase (276 aa).

NAD(+)-binding positions include 12 to 14 (GKM), E33, and D69. Zn(2+) is bound by residues H114 and E184.

The protein belongs to the ApnO family. The cofactor is Zn(2+).

The catalysed reaction is D-apionate + NAD(+) = 3-oxoisoapionate + NADH + H(+). Its pathway is carbohydrate metabolism. Its function is as follows. Involved in catabolism of D-apiose. Catalyzes the conversion of D-apionate to 3-oxo-isoapionate. The polypeptide is D-apionate oxidoisomerase (Cupriavidus necator (strain ATCC 43291 / DSM 13513 / CCUG 52238 / LMG 8453 / N-1) (Ralstonia eutropha)).